Reading from the N-terminus, the 88-residue chain is Small ribosomal subunit protein bS20 (88 aa).

2 disordered regions span residues 1-25 (MPNI…KAVK) and 68-88 (HKNQ…SLAA).

Belongs to the bacterial ribosomal protein bS20 family.

In terms of biological role, binds directly to 16S ribosomal RNA. This Cutibacterium acnes (strain DSM 16379 / KPA171202) (Propionibacterium acnes) protein is Small ribosomal subunit protein bS20.